The chain runs to 147 residues: Putative nickel-responsive regulator (147 aa).

Residues H76, H87, H89, and C95 each coordinate Ni(2+).

The protein belongs to the transcriptional regulatory CopG/NikR family. It depends on Ni(2+) as a cofactor.

Its function is as follows. Transcriptional regulator. The sequence is that of Putative nickel-responsive regulator from Rhodopseudomonas palustris (strain TIE-1).